The primary structure comprises 439 residues: Homogentisate 1,2-dioxygenase (439 aa).

Fe cation-binding residues include His-335, Glu-341, and His-371.

Belongs to the homogentisate dioxygenase family. The cofactor is Fe cation.

It carries out the reaction homogentisate + O2 = 4-maleylacetoacetate + H(+). It functions in the pathway amino-acid degradation; L-phenylalanine degradation; acetoacetate and fumarate from L-phenylalanine: step 4/6. This Drosophila melanogaster (Fruit fly) protein is Homogentisate 1,2-dioxygenase.